A 194-amino-acid polypeptide reads, in one-letter code: MTENSTSAPAAKPKRAKASKKSTDHPKYSDMIVAAIQAEKNRAGSSRQSIQKYIKSHYKVGENADSQIKLSIKRLVTTGVLKQTKGVGASGSFRLAKGDEPKRSVAFKKTKKEVKKVATPKKAAKPKKAASKAPSKKPKATPVKKAKKKPAATPKKAKKPKVVKVKPVKASKPKKAKTVKPKAKSSAKRASKKK.

M1 carries the post-translational modification N-acetylmethionine. Over residues 1–11 the composition is skewed to low complexity; the sequence is MTENSTSAPAA. A disordered region spans residues 1–28; sequence MTENSTSAPAAKPKRAKASKKSTDHPKY. Residue T2 is modified to N-acetylthreonine; in Histone H1.0, N-terminally processed. Residues 24–97 form the H15 domain; the sequence is DHPKYSDMIV…GASGSFRLAK (74 aa). Citrulline is present on R42. The tract at residues 86-194 is disordered; it reads GVGASGSFRL…SSAKRASKKK (109 aa). At S104 the chain carries ADP-ribosylserine. Residues 105–194 are compositionally biased toward basic residues; it reads VAFKKTKKEV…SSAKRASKKK (90 aa).

It belongs to the histone H1/H5 family. Post-translationally, ADP-ribosylated on Ser-104 in response to DNA damage.

The protein resides in the nucleus. Its subcellular location is the chromosome. Histones H1 are necessary for the condensation of nucleosome chains into higher-order structures. The histones H1.0 are found in cells that are in terminal stages of differentiation or that have low rates of cell division. This Mus musculus (Mouse) protein is Histone H1.0 (H1-0).